Reading from the N-terminus, the 273-residue chain is Formamidopyrimidine-DNA glycosylase (273 aa).

Pro2 serves as the catalytic Schiff-base intermediate with DNA. Glu3 serves as the catalytic Proton donor. The active-site Proton donor; for beta-elimination activity is Lys60. DNA is bound by residues His94, Arg113, and Lys154. The segment at 239 to 273 adopts an FPG-type zinc-finger fold; sequence EAYGRTGEPCRRCGTPIERIVVAQRSTHICPVCQA. Residue Arg263 is the Proton donor; for delta-elimination activity of the active site.

Belongs to the FPG family. As to quaternary structure, monomer. The cofactor is Zn(2+).

The enzyme catalyses Hydrolysis of DNA containing ring-opened 7-methylguanine residues, releasing 2,6-diamino-4-hydroxy-5-(N-methyl)formamidopyrimidine.. It catalyses the reaction 2'-deoxyribonucleotide-(2'-deoxyribose 5'-phosphate)-2'-deoxyribonucleotide-DNA = a 3'-end 2'-deoxyribonucleotide-(2,3-dehydro-2,3-deoxyribose 5'-phosphate)-DNA + a 5'-end 5'-phospho-2'-deoxyribonucleoside-DNA + H(+). Its function is as follows. Involved in base excision repair of DNA damaged by oxidation or by mutagenic agents. Acts as a DNA glycosylase that recognizes and removes damaged bases. Has a preference for oxidized purines, such as 7,8-dihydro-8-oxoguanine (8-oxoG). Has AP (apurinic/apyrimidinic) lyase activity and introduces nicks in the DNA strand. Cleaves the DNA backbone by beta-delta elimination to generate a single-strand break at the site of the removed base with both 3'- and 5'-phosphates. This is Formamidopyrimidine-DNA glycosylase from Herpetosiphon aurantiacus (strain ATCC 23779 / DSM 785 / 114-95).